The sequence spans 215 residues: Adenylate kinase (215 aa).

10–15 (GAGKGT) serves as a coordination point for ATP. Positions 30–59 (STGDMLRAAIKAQTPMGKMAKEFMDAGKLV) are NMP. AMP-binding positions include threonine 31, arginine 36, 57 to 59 (KLV), 85 to 88 (GFPR), and glutamine 92. Residues 122 to 159 (GRRVHPASGRTYHITYNPPKVDDKDNETGDDLIQREDD) are LID. ATP contacts are provided by residues arginine 123 and 132-133 (TY). The AMP site is built by arginine 156 and arginine 167. Glutamine 201 is a binding site for ATP.

It belongs to the adenylate kinase family. In terms of assembly, monomer.

It is found in the cytoplasm. It carries out the reaction AMP + ATP = 2 ADP. The protein operates within purine metabolism; AMP biosynthesis via salvage pathway; AMP from ADP: step 1/1. Catalyzes the reversible transfer of the terminal phosphate group between ATP and AMP. Plays an important role in cellular energy homeostasis and in adenine nucleotide metabolism. The chain is Adenylate kinase from Hydrogenovibrio crunogenus (strain DSM 25203 / XCL-2) (Thiomicrospira crunogena).